The sequence spans 187 residues: Ribosome-recycling factor (187 aa).

It belongs to the RRF family.

It is found in the cytoplasm. In terms of biological role, responsible for the release of ribosomes from messenger RNA at the termination of protein biosynthesis. May increase the efficiency of translation by recycling ribosomes from one round of translation to another. This Orientia tsutsugamushi (strain Ikeda) (Rickettsia tsutsugamushi) protein is Ribosome-recycling factor.